Here is a 251-residue protein sequence, read N- to C-terminus: uncharacterized protein (251 aa).

Belongs to the FAM243 family.

This is an uncharacterized protein from Homo sapiens (Human).